A 389-amino-acid polypeptide reads, in one-letter code: Na(+)/H(+) antiporter NhaA 1 (389 aa).

12 helical membrane-spanning segments follow: residues 12–32 (VLNE…ALLV), 62–82 (FLLW…GLEL), 97–117 (IVLP…LFVL), 128–148 (GWAI…MMCG), 157–177 (IFLL…IAIF), 184–204 (IVAF…NILG), 220–240 (ISVL…AFFI), 260–280 (FWLA…VNLS), 282–302 (IDIG…LFVG), 305–325 (AGVF…LPQG), 331–351 (LYGV…IDGL), and 365–385 (LAIL…LKFF).

Belongs to the NhaA Na(+)/H(+) (TC 2.A.33) antiporter family.

It is found in the cell inner membrane. The enzyme catalyses Na(+)(in) + 2 H(+)(out) = Na(+)(out) + 2 H(+)(in). Its function is as follows. Na(+)/H(+) antiporter that extrudes sodium in exchange for external protons. The polypeptide is Na(+)/H(+) antiporter NhaA 1 (Campylobacter jejuni subsp. jejuni serotype O:23/36 (strain 81-176)).